Here is a 134-residue protein sequence, read N- to C-terminus: Agouti-related protein (134 aa).

The signal sequence occupies residues 1 to 20; the sequence is MLTAVLLSCALLLAMPPLQG. Residues 21-84 constitute a propeptide that is removed on maturation; the sequence is AQMGPAPLEG…VLDPEGRKPR (64 aa). 5 disulfides stabilise this stretch: Cys89-Cys104, Cys96-Cys110, Cys103-Cys121, Cys107-Cys131, and Cys112-Cys119. An Agouti domain is found at 89–131; it reads CVRLHESCLGHQVPCCDPCATCYCRFFNAFCYCRKLGTTTNPC. Residues 113–115 are interaction with melanocortin receptors; the sequence is RFF.

As to quaternary structure, interacts with melanocortin receptors MC3R, MC4R and MC5R.

The protein localises to the secreted. It localises to the golgi apparatus lumen. Plays a role in weight homeostasis. Involved in the control of feeding behavior through the central melanocortin system. Acts as alpha melanocyte-stimulating hormone antagonist by inhibiting cAMP production mediated by stimulation of melanocortin receptors within the hypothalamus and adrenal gland. Has very low activity with MC5R. Is an inverse agonist for MC3R and MC4R being able to suppress their constitutive activity. It promotes MC3R and MC4R endocytosis in an arrestin-dependent manner. This Bos taurus (Bovine) protein is Agouti-related protein (AGRP).